Here is a 567-residue protein sequence, read N- to C-terminus: Oxygen-dependent choline dehydrogenase (567 aa).

Residue 6 to 35 coordinates FAD; that stretch reads DYIIVGAGSAGNTLATRLTEDEGVTVLLLE. The Proton acceptor role is filled by His-475.

The protein belongs to the GMC oxidoreductase family. FAD is required as a cofactor.

The enzyme catalyses choline + A = betaine aldehyde + AH2. It catalyses the reaction betaine aldehyde + NAD(+) + H2O = glycine betaine + NADH + 2 H(+). The protein operates within amine and polyamine biosynthesis; betaine biosynthesis via choline pathway; betaine aldehyde from choline (cytochrome c reductase route): step 1/1. Its function is as follows. Involved in the biosynthesis of the osmoprotectant glycine betaine. Catalyzes the oxidation of choline to betaine aldehyde and betaine aldehyde to glycine betaine at the same rate. This is Oxygen-dependent choline dehydrogenase from Pseudomonas fluorescens (strain Pf0-1).